A 321-amino-acid chain; its full sequence is Lipoyl synthase (321 aa).

Positions 68, 73, 79, 94, 98, 101, and 308 each coordinate [4Fe-4S] cluster. In terms of domain architecture, Radical SAM core spans 80-297; it reads FNHGTATFMI…KEIALELGFT (218 aa).

The protein belongs to the radical SAM superfamily. Lipoyl synthase family. It depends on [4Fe-4S] cluster as a cofactor.

The protein localises to the cytoplasm. The catalysed reaction is [[Fe-S] cluster scaffold protein carrying a second [4Fe-4S](2+) cluster] + N(6)-octanoyl-L-lysyl-[protein] + 2 oxidized [2Fe-2S]-[ferredoxin] + 2 S-adenosyl-L-methionine + 4 H(+) = [[Fe-S] cluster scaffold protein] + N(6)-[(R)-dihydrolipoyl]-L-lysyl-[protein] + 4 Fe(3+) + 2 hydrogen sulfide + 2 5'-deoxyadenosine + 2 L-methionine + 2 reduced [2Fe-2S]-[ferredoxin]. The protein operates within protein modification; protein lipoylation via endogenous pathway; protein N(6)-(lipoyl)lysine from octanoyl-[acyl-carrier-protein]: step 2/2. Catalyzes the radical-mediated insertion of two sulfur atoms into the C-6 and C-8 positions of the octanoyl moiety bound to the lipoyl domains of lipoate-dependent enzymes, thereby converting the octanoylated domains into lipoylated derivatives. This Vibrio campbellii (strain ATCC BAA-1116) protein is Lipoyl synthase.